The sequence spans 201 residues: Holliday junction branch migration complex subunit RuvA (201 aa).

Residues 1 to 64 (MIGFIRGLLV…EDAHSLFGFG (64 aa)) are domain I. Residues 65–143 (TEAERGLFRS…IGVPSLAPAS (79 aa)) are domain II. The interval 144-153 (FAGGAAPLPA) is flexible linker. The tract at residues 153–201 (AADPADEAVSALIALGFKPQEANTLVARQAAEGRSAEDLIRAALQSAVR) is domain III.

The protein belongs to the RuvA family. As to quaternary structure, homotetramer. Forms an RuvA(8)-RuvB(12)-Holliday junction (HJ) complex. HJ DNA is sandwiched between 2 RuvA tetramers; dsDNA enters through RuvA and exits via RuvB. An RuvB hexamer assembles on each DNA strand where it exits the tetramer. Each RuvB hexamer is contacted by two RuvA subunits (via domain III) on 2 adjacent RuvB subunits; this complex drives branch migration. In the full resolvosome a probable DNA-RuvA(4)-RuvB(12)-RuvC(2) complex forms which resolves the HJ.

It is found in the cytoplasm. Functionally, the RuvA-RuvB-RuvC complex processes Holliday junction (HJ) DNA during genetic recombination and DNA repair, while the RuvA-RuvB complex plays an important role in the rescue of blocked DNA replication forks via replication fork reversal (RFR). RuvA specifically binds to HJ cruciform DNA, conferring on it an open structure. The RuvB hexamer acts as an ATP-dependent pump, pulling dsDNA into and through the RuvAB complex. HJ branch migration allows RuvC to scan DNA until it finds its consensus sequence, where it cleaves and resolves the cruciform DNA. The sequence is that of Holliday junction branch migration complex subunit RuvA from Methylococcus capsulatus (strain ATCC 33009 / NCIMB 11132 / Bath).